The chain runs to 599 residues: Matrix metallopeptidase-21 (599 aa).

The N-terminal stretch at 1-20 is a signal peptide; the sequence is MLTVIRRIFIIQTFIFITAE. The propeptide occupies 21–170; sequence KIFHSRDHSD…NHEHQAPVRK (150 aa). Cys-130 is a Zn(2+) binding site. The segment at 141 to 170 is disordered; that stretch reads DVTGSNSTRNHIRTSTNTSHNHEHQAPVRK. Positions 143 to 159 are enriched in polar residues; it reads TGSNSTRNHIRTSTNTS. Residue His-309 participates in Zn(2+) binding. The active site involves Glu-310. Zn(2+)-binding residues include His-313 and His-319. A disulfide bond links Cys-355 and Cys-586. 4 Hemopexin repeats span residues 356–415, 417–473, 474–522, and 529–585; these read TGRF…WHGL, SGGV…FPGV, SGPL…FPAI, and VRSL…WFDI. Asn-398 is a glycosylation site (N-linked (GlcNAc...) asparagine).

Belongs to the peptidase M10A family. Post-translationally, the precursor is cleaved by a furin endopeptidase.

Plays a specialized role in the generation of left-right asymmetry during embryogenesis. May act as a negative regulator of the NOTCH-signaling pathway. In Danio rerio (Zebrafish), this protein is Matrix metallopeptidase-21.